The sequence spans 71 residues: UPF0346 protein SUB0487 (71 aa).

Belongs to the UPF0346 family.

This Streptococcus uberis (strain ATCC BAA-854 / 0140J) protein is UPF0346 protein SUB0487.